We begin with the raw amino-acid sequence, 227 residues long: Heptaprenylglyceryl phosphate synthase (227 aa).

Lys13 provides a ligand contact to sn-glycerol 1-phosphate. Positions 15 and 41 each coordinate Mg(2+). Residues Tyr159–Gly164, Gly189, and Gly209–Asn210 contribute to the sn-glycerol 1-phosphate site.

The protein belongs to the GGGP/HepGP synthase family. Group I subfamily. In terms of assembly, homodimer. Requires Mg(2+) as cofactor.

The catalysed reaction is sn-glycerol 1-phosphate + all-trans-heptaprenyl diphosphate = 3-heptaprenyl-sn-glycero-1-phosphate + diphosphate. It functions in the pathway membrane lipid metabolism; glycerophospholipid metabolism. Functionally, prenyltransferase that catalyzes in vivo the transfer of the heptaprenyl moiety of heptaprenyl pyrophosphate (HepPP; 35 carbon atoms) to the C3 hydroxyl of sn-glycerol-1-phosphate (G1P), producing heptaprenylglyceryl phosphate (HepGP). This reaction is an ether-bond-formation step in the biosynthesis of archaea-type G1P-based membrane lipids found in Bacillales. The protein is Heptaprenylglyceryl phosphate synthase of Exiguobacterium sibiricum (strain DSM 17290 / CCUG 55495 / CIP 109462 / JCM 13490 / 255-15).